The chain runs to 175 residues: Protein SELF-PRUNING (175 aa).

It belongs to the phosphatidylethanolamine-binding protein family.

It localises to the cytoplasm. Functionally, not known. In plants homozygous for the recessive allele of the SP gene, sympodial segments develop progressively fewer nodes until the shoot is terminated by two consecutive. inflorescences. This is Protein SELF-PRUNING (SP) from Solanum lycopersicum (Tomato).